Here is a 658-residue protein sequence, read N- to C-terminus: Endoglin (658 aa).

An N-terminal signal peptide occupies residues 1-25 (MDRGTLPLAVALLLASCSLSPTSLA). Residues 26–46 (ETVHCDLQPVGPERGEVTYTT) form an OR1, N-terminal part region. Positions 26–337 (ETVHCDLQPV…SSCGGRLQTS (312 aa)) are required for interaction with GDF2. Residues 26–586 (ETVHCDLQPV…PDLSGCTSKG (561 aa)) are Extracellular-facing. Disulfide bonds link Cys30–Cys207, Cys53–Cys182, Cys242–Cys330, Cys350–Cys382, Cys363–Cys442, Cys394–Cys412, and Cys493–Cys549. An OR2 region spans residues 47–199 (SQVSKGCVAQ…MGRTLEWRPR (153 aa)). Asn88, Asn102, Asn121, and Asn134 each carry an N-linked (GlcNAc...) asparagine glycan. Positions 200–330 (TPALVRGCHL…SIVSLHASSC (131 aa)) are OR1, C-terminal part. Positions 270–282 (QIWTTGEYSFKIF) are essential for interaction with GDF2. The N-linked (GlcNAc...) asparagine glycan is linked to Asn307. Residues 363–533 (CADDAMTLVL…PEGDPRFSFL (171 aa)) form the ZP domain. A Cell attachment site motif is present at residues 399–401 (RGD). The chain crosses the membrane as a helical span at residues 587 to 611 (LVLPAVLGITFGAFLIGALLTAALW). Residues 612 to 658 (YIYSHTRSPSKREPVVAVAAPASSESSSTNHSIGSTQSTPCSTSSMA) lie on the Cytoplasmic side of the membrane. Residues 626–639 (VVAVAAPASSESSS) are compositionally biased toward low complexity. A disordered region spans residues 626–658 (VVAVAAPASSESSSTNHSIGSTQSTPCSTSSMA). The segment covering 640 to 658 (TNHSIGSTQSTPCSTSSMA) has biased composition (polar residues). Phosphoserine; by TGFBR1 occurs at positions 646 and 649.

As to quaternary structure, homodimer; disulfide-linked. Forms a heteromeric complex with the signaling receptors for transforming growth factor-beta: TGFBR1 and/or TGFBR2. It is able to bind TGFB1 and TGFB2 with high affinity, but not TGFB3. Interacts with GDF2, forming a heterotetramer with a 2:2 stoichiometry. Interacts with ACVRL1. Can form a heteromeric complex with GDF2 and ACVRL1. Interacts with BMP10. Interacts with DYNLT4. Interacts with ARRB2. Detected on umbilical veil endothelial cells. Detected in placenta (at protein level). Detected on endothelial cells.

It localises to the cell membrane. In terms of biological role, vascular endothelium glycoprotein that plays an important role in the regulation of angiogenesis. Required for normal structure and integrity of adult vasculature. Regulates the migration of vascular endothelial cells. Required for normal extraembryonic angiogenesis and for embryonic heart development. May regulate endothelial cell shape changes in response to blood flow, which drive vascular remodeling and establishment of normal vascular morphology during angiogenesis. May play a critical role in the binding of endothelial cells to integrins and/or other RGD receptors. Acts as a TGF-beta coreceptor and is involved in the TGF-beta/BMP signaling cascade that ultimately leads to the activation of SMAD transcription factors. Required for GDF2/BMP9 signaling through SMAD1 in endothelial cells and modulates TGFB1 signaling through SMAD3. In Homo sapiens (Human), this protein is Endoglin (ENG).